The following is a 217-amino-acid chain: Phosphate-specific transport system accessory protein PhoU homolog 2 (217 aa).

It belongs to the PhoU family. As to quaternary structure, homodimer.

It is found in the cytoplasm. Functionally, plays a role in the regulation of phosphate uptake. The sequence is that of Phosphate-specific transport system accessory protein PhoU homolog 2 from Methanothermobacter thermautotrophicus (strain ATCC 29096 / DSM 1053 / JCM 10044 / NBRC 100330 / Delta H) (Methanobacterium thermoautotrophicum).